Reading from the N-terminus, the 259-residue chain is MAAAAAAAAGDSDSWDADTFSMEDPVRKVAGGGTAGGDRWEGEDEDEDVKDNWDDDDDENKEEAEVKPEVKISEKKKIAEKIKEKERQQKKRQEEIKKRLEEPEESKVLTPEEQLADKLRLKKLQEESDLELAKETFGVNNTVYGIDAMNPSSRDDFTEFGKLLKDKITQYEKSLYYASFLEALVRDVCISLEIDDLKKITNSLTVLCSEKQKQEKQSKAKKKKKGVVPGGGLKATMKDDLADYGGYDGGYVQDYEDFM.

Residues 1–70 (MAAAAAAAAG…KEEAEVKPEV (70 aa)) are sufficient for interaction with EIF3B. The segment at 1–111 (MAAAAAAAAG…EPEESKVLTP (111 aa)) is disordered. Ser-12, Ser-14, and Ser-21 each carry phosphoserine. Acidic residues predominate over residues 41 to 62 (EGEDEDEDVKDNWDDDDDENKE). Residues 63-107 (EAEVKPEVKISEKKKIAEKIKEKERQQKKRQEEIKKRLEEPEESK) show a composition bias toward basic and acidic residues. Residues 71-136 (KISEKKKIAE…ESDLELAKET (66 aa)) adopt a coiled-coil conformation. Lys-107 participates in a covalent cross-link: Glycyl lysine isopeptide (Lys-Gly) (interchain with G-Cter in SUMO2). Residue Thr-110 is modified to Phosphothreonine. Phosphoserine is present on Ser-128. The tract at residues 218–247 (SKAKKKKKGVVPGGGLKATMKDDLADYGGY) is disordered. A promotes stable association with the 40S ribosome region spans residues 244–259 (YGGYDGGYVQDYEDFM). Residue Tyr-255 is modified to Phosphotyrosine.

Belongs to the eIF-3 subunit J family. Component of the eukaryotic translation initiation factor 3 (eIF-3) complex, which is composed of 13 subunits: EIF3A, EIF3B, EIF3C, EIF3D, EIF3E, EIF3F, EIF3G, EIF3H, EIF3I, EIF3J, EIF3K, EIF3L and EIF3M. The eIF-3 complex appears to include 3 stable modules: module A is composed of EIF3A, EIF3B, EIF3G and EIF3I; module B is composed of EIF3F, EIF3H, and EIF3M; and module C is composed of EIF3C, EIF3D, EIF3E, EIF3K and EIF3L. EIF3C of module C binds EIF3B of module A and EIF3H of module B, thereby linking the three modules. EIF3J is a labile subunit that binds to the eIF-3 complex via EIF3B. The eIF-3 complex interacts with RPS6KB1 under conditions of nutrient depletion. Mitogenic stimulation leads to binding and activation of a complex composed of MTOR and RPTOR, leading to phosphorylation and release of RPS6KB1 and binding of EIF4B to eIF-3. In terms of processing, phosphorylated. Phosphorylation is enhanced upon serum stimulation.

Its subcellular location is the cytoplasm. In terms of biological role, component of the eukaryotic translation initiation factor 3 (eIF-3) complex, which is required for several steps in the initiation of protein synthesis. The eIF-3 complex associates with the 40S ribosome and facilitates the recruitment of eIF-1, eIF-1A, eIF-2:GTP:methionyl-tRNAi and eIF-5 to form the 43S pre-initiation complex (43S PIC). The eIF-3 complex stimulates mRNA recruitment to the 43S PIC and scanning of the mRNA for AUG recognition. The eIF-3 complex is also required for disassembly and recycling of post-termination ribosomal complexes and subsequently prevents premature joining of the 40S and 60S ribosomal subunits prior to initiation. The eIF-3 complex specifically targets and initiates translation of a subset of mRNAs involved in cell proliferation, including cell cycling, differentiation and apoptosis, and uses different modes of RNA stem-loop binding to exert either translational activation or repression. This subunit binds directly within the mRNA entry channel of the 40S ribosome to the aminoacyl (A) site. It may regulate the interaction between the 43S PIC and mRNA. The chain is Eukaryotic translation initiation factor 3 subunit J (Eif3j) from Rattus norvegicus (Rat).